The sequence spans 69 residues: Magnetosome protein MamI (69 aa).

Residues 1-2 are Cytoplasmic-facing; it reads MP. The helical transmembrane segment at 3-23 threads the bilayer; that stretch reads SVIFGLLALAIGLLGLTAWWW. At 24–31 the chain is on the lumenal side; the sequence is SVTEFLRG. The chain crosses the membrane as a helical span at residues 32-52; the sequence is AVPVALIIFGLVALAAGVQSV. The Cytoplasmic segment spans residues 53–69; it reads RVPPAGKRANSDPNIDG.

Belongs to the magnetosome MamI protein family.

The protein localises to the magnetosome membrane. Functionally, may be involved in an early stage of magnetosome nucleation. Not essential for formation of magnetosome membrane vesicles, it is probably functionally redundant with other proteins. May bind magnetite. One of 7 genes (mamLQBIEMO) able to induce magnetosome membrane biogenesis; coexpression of mamLQRBIEMO in a deletion of the 17 gene mamAB operon restores magnetosome vesicle formation but not magnetite biosynthesis. In Magnetospirillum gryphiswaldense (strain DSM 6361 / JCM 21280 / NBRC 15271 / MSR-1), this protein is Magnetosome protein MamI.